The following is a 118-amino-acid chain: Transcription factor PAR1 (118 aa).

The disordered stretch occupies residues 1-58; it reads MEETLATPDATRRSLSPSCSATVKSRAAGFERRTKRRLSETNASVREDREEAEEEEDE. Residues 13–23 are compositionally biased toward polar residues; it reads RSLSPSCSATV. Positions 43 to 92 constitute a bHLH domain; that stretch reads ASVREDREEAEEEEDEVKEKIEALQRIIPGGAALGVDALFEETAGYILSL.

Belongs to the bHLH protein family. Homodimer.

The protein resides in the nucleus. Functionally, atypical bHLH transcription factor that acts as a negative regulator of a variety of shade avoidance syndrome (SAS) responses, including seedling elongation and photosynthetic pigment accumulation. Acts as a direct transcriptional repressor of two auxin-responsive genes, SAUR15 and SAUR68. May function in integrating shade and hormone transcriptional networks in response to light and auxin changes. This chain is Transcription factor PAR1 (PAR1), found in Arabidopsis thaliana (Mouse-ear cress).